Consider the following 734-residue polypeptide: Probable carboxypeptidase X1 (734 aa).

The first 20 residues, 1–20 (MWGLLLALAAFAPAVGPALG), serve as a signal peptide directing secretion. The tract at residues 30–62 (AQPGTTKVPGSTPALHSSPAQPPAETANGTSEQ) is disordered. Over residues 32–48 (PGTTKVPGSTPALHSSP) the composition is skewed to polar residues. Asn-57, Asn-210, Asn-220, and Asn-318 each carry an N-linked (GlcNAc...) asparagine glycan. The F5/8 type C domain occupies 113-274 (TGCPPLGLES…PCLRAEILAC (162 aa)). Cys-115 and Cys-274 are joined by a disulfide. Positions 298–621 (QHHNYKAMRK…DALLTYLEQV (324 aa)) constitute a Peptidase M14 domain. Zn(2+)-binding residues include His-360 and Glu-363. Asn-428 and Asn-472 each carry an N-linked (GlcNAc...) asparagine glycan. His-498 is a Zn(2+) binding site. Glu-591 functions as the Proton donor/acceptor in the catalytic mechanism.

Belongs to the peptidase M14 family. Zn(2+) serves as cofactor.

The protein localises to the secreted. May be involved in cell-cell interactions. No carboxypeptidase activity was found yet. This chain is Probable carboxypeptidase X1 (CPXM1), found in Homo sapiens (Human).